Reading from the N-terminus, the 326-residue chain is Holliday junction branch migration complex subunit RuvB (326 aa).

A large ATPase domain (RuvB-L) region spans residues Met-1–Tyr-180. ATP-binding positions include Ile-19, Arg-20, Gly-61, Lys-64, Thr-65, Thr-66, Glu-127–Phe-129, Arg-170, Tyr-180, and Arg-217. Thr-65 lines the Mg(2+) pocket. A small ATPAse domain (RuvB-S) region spans residues Ser-181–Gly-251. The interval Lys-254–His-326 is head domain (RuvB-H). Positions 307 and 312 each coordinate DNA.

The protein belongs to the RuvB family. Homohexamer. Forms an RuvA(8)-RuvB(12)-Holliday junction (HJ) complex. HJ DNA is sandwiched between 2 RuvA tetramers; dsDNA enters through RuvA and exits via RuvB. An RuvB hexamer assembles on each DNA strand where it exits the tetramer. Each RuvB hexamer is contacted by two RuvA subunits (via domain III) on 2 adjacent RuvB subunits; this complex drives branch migration. In the full resolvosome a probable DNA-RuvA(4)-RuvB(12)-RuvC(2) complex forms which resolves the HJ.

It is found in the cytoplasm. The enzyme catalyses ATP + H2O = ADP + phosphate + H(+). Its function is as follows. The RuvA-RuvB-RuvC complex processes Holliday junction (HJ) DNA during genetic recombination and DNA repair, while the RuvA-RuvB complex plays an important role in the rescue of blocked DNA replication forks via replication fork reversal (RFR). RuvA specifically binds to HJ cruciform DNA, conferring on it an open structure. The RuvB hexamer acts as an ATP-dependent pump, pulling dsDNA into and through the RuvAB complex. RuvB forms 2 homohexamers on either side of HJ DNA bound by 1 or 2 RuvA tetramers; 4 subunits per hexamer contact DNA at a time. Coordinated motions by a converter formed by DNA-disengaged RuvB subunits stimulates ATP hydrolysis and nucleotide exchange. Immobilization of the converter enables RuvB to convert the ATP-contained energy into a lever motion, pulling 2 nucleotides of DNA out of the RuvA tetramer per ATP hydrolyzed, thus driving DNA branch migration. The RuvB motors rotate together with the DNA substrate, which together with the progressing nucleotide cycle form the mechanistic basis for DNA recombination by continuous HJ branch migration. Branch migration allows RuvC to scan DNA until it finds its consensus sequence, where it cleaves and resolves cruciform DNA. The chain is Holliday junction branch migration complex subunit RuvB from Wolbachia pipientis wMel.